Reading from the N-terminus, the 32-residue chain is Cytochrome b6-f complex subunit 7 (32 aa).

The helical transmembrane segment at 9–27 threads the bilayer; that stretch reads AAVFWILIPIGLVGGALLL.

Belongs to the PetM family. As to quaternary structure, the 4 large subunits of the cytochrome b6-f complex are cytochrome b6, subunit IV (17 kDa polypeptide, PetD), cytochrome f and the Rieske protein, while the 4 small subunits are PetG, PetL, PetM and PetN. The complex functions as a dimer.

It is found in the cellular thylakoid membrane. Its function is as follows. Component of the cytochrome b6-f complex, which mediates electron transfer between photosystem II (PSII) and photosystem I (PSI), cyclic electron flow around PSI, and state transitions. The chain is Cytochrome b6-f complex subunit 7 from Prochlorococcus marinus (strain MIT 9301).